The chain runs to 40 residues: Esterase-4 (40 aa).

It belongs to the type-B carboxylesterase/lipase family.

It catalyses the reaction a carboxylic ester + H2O = an alcohol + a carboxylate + H(+). The chain is Esterase-4 (Est-4) from Drosophila mojavensis (Fruit fly).